We begin with the raw amino-acid sequence, 196 residues long: dTTP/UTP pyrophosphatase (196 aa).

Asp77 (proton acceptor) is an active-site residue.

The protein belongs to the Maf family. YhdE subfamily. The cofactor is a divalent metal cation.

It is found in the cytoplasm. The catalysed reaction is dTTP + H2O = dTMP + diphosphate + H(+). It carries out the reaction UTP + H2O = UMP + diphosphate + H(+). Functionally, nucleoside triphosphate pyrophosphatase that hydrolyzes dTTP and UTP. May have a dual role in cell division arrest and in preventing the incorporation of modified nucleotides into cellular nucleic acids. This is dTTP/UTP pyrophosphatase from Christiangramia forsetii (strain DSM 17595 / CGMCC 1.15422 / KT0803) (Gramella forsetii).